Here is a 235-residue protein sequence, read N- to C-terminus: Probable transcriptional regulatory protein CJJ81176_1187 (235 aa).

The protein belongs to the TACO1 family.

The protein localises to the cytoplasm. The protein is Probable transcriptional regulatory protein CJJ81176_1187 of Campylobacter jejuni subsp. jejuni serotype O:23/36 (strain 81-176).